Here is a 253-residue protein sequence, read N- to C-terminus: Small ribosomal subunit protein uS3 (253 aa).

A KH type-2 domain is found at Leu-21–Ala-92. The disordered stretch occupies residues Val-211–Ala-253. A compositionally biased stretch (pro residues) spans Pro-233 to Ala-253.

The protein belongs to the universal ribosomal protein uS3 family.

The protein localises to the cytoplasm. The protein resides in the nucleus. It localises to the nucleolus. Its subcellular location is the mitochondrion inner membrane. It is found in the cytoskeleton. The protein localises to the spindle. The enzyme catalyses 2'-deoxyribonucleotide-(2'-deoxyribose 5'-phosphate)-2'-deoxyribonucleotide-DNA = a 3'-end 2'-deoxyribonucleotide-(2,3-dehydro-2,3-deoxyribose 5'-phosphate)-DNA + a 5'-end 5'-phospho-2'-deoxyribonucleoside-DNA + H(+). In terms of biological role, component of the small ribosomal subunit. The ribosome is a large ribonucleoprotein complex responsible for the synthesis of proteins in the cell. Has endonuclease activity and plays a role in repair of damaged DNA. Also involved in other processes including regulation of transcription, translation of its cognate mRNA, spindle formation and chromosome movement during mitosis, and apoptosis. The chain is Small ribosomal subunit protein uS3 (RPS3) from Ambystoma mexicanum (Axolotl).